Reading from the N-terminus, the 356-residue chain is GTPase HflX (356 aa).

A Hflx-type G domain is found at 180-356; it reads PSIGIVGYTN…KIYQLATQLS (177 aa). GTP contacts are provided by residues 186–193, 211–215, 232–235, 300–303, and 334–336; these read GYTNSGKT, FTTMS, DTVG, NKID, and SAL. Positions 193 and 213 each coordinate Mg(2+).

The protein belongs to the TRAFAC class OBG-HflX-like GTPase superfamily. HflX GTPase family. In terms of assembly, monomer. Associates with the 50S ribosomal subunit. Does not associate with 70S ribosomes. The cofactor is Mg(2+).

It is found in the cytoplasm. GTPase activity is stimulated by the presence of 50S ribosomal subunits. Hydrolysis is probably regulated by the HflX N-terminal domain. Its function is as follows. GTPase that associates with the 50S ribosomal subunit and may have a role during protein synthesis or ribosome biogenesis. Specific for GTP. The sequence is that of GTPase HflX from Saccharolobus solfataricus (strain ATCC 35092 / DSM 1617 / JCM 11322 / P2) (Sulfolobus solfataricus).